Reading from the N-terminus, the 407-residue chain is GTPase Obg (407 aa).

In terms of domain architecture, Obg spans 1–159 (MKFVDEVSIR…RDLKLEMKVL (159 aa)). Residues 128 to 148 (TRFKSSTNRAPRQTTPGKPGE) form a disordered region. The span at 129–143 (RFKSSTNRAPRQTTP) shows a compositional bias: polar residues. Positions 160 to 333 (ADVGLLGLPN…LTRDIMRYLE (174 aa)) constitute an OBG-type G domain. Residues 166–173 (GLPNAGKS), 191–195 (FTTLV), 213–216 (DIPG), 283–286 (NKCD), and 314–316 (SAI) contribute to the GTP site. 2 residues coordinate Mg(2+): S173 and T193. The interval 376 to 407 (SGVKSVHDIGDDDWDEEDVDDEDGPEIIYVRD) is disordered. Residues 385-400 (GDDDWDEEDVDDEDGP) are compositionally biased toward acidic residues.

The protein belongs to the TRAFAC class OBG-HflX-like GTPase superfamily. OBG GTPase family. As to quaternary structure, monomer. It depends on Mg(2+) as a cofactor.

The protein localises to the cytoplasm. Its function is as follows. An essential GTPase which binds GTP, GDP and possibly (p)ppGpp with moderate affinity, with high nucleotide exchange rates and a fairly low GTP hydrolysis rate. Plays a role in control of the cell cycle, stress response, ribosome biogenesis and in those bacteria that undergo differentiation, in morphogenesis control. This chain is GTPase Obg, found in Pseudomonas fluorescens (strain Pf0-1).